Consider the following 175-residue polypeptide: Probable DNA-directed RNA polymerase subunit delta (175 aa).

Positions 14–81 constitute an HTH HARE-type domain; it reads CSMIEVVHSV…GENRWGLRSW (68 aa). Residues 91–175 are disordered; the sequence is ILPQPKPKKK…DETEEEEEEL (85 aa). Residues 106 to 175 are compositionally biased toward acidic residues; it reads DGFDDYIEED…DETEEEEEEL (70 aa).

Belongs to the RpoE family. RNAP is composed of a core of 2 alpha, a beta and a beta' subunits. The core is associated with a delta subunit and one of several sigma factors.

Participates in both the initiation and recycling phases of transcription. In the presence of the delta subunit, RNAP displays an increased specificity of transcription, a decreased affinity for nucleic acids, and an increased efficiency of RNA synthesis because of enhanced recycling. This chain is Probable DNA-directed RNA polymerase subunit delta, found in Bacillus anthracis.